The sequence spans 919 residues: GPI ethanolamine phosphate transferase 1 (919 aa).

Over 1–9 the chain is Cytoplasmic; it reads MWNKTRTTL. Residues 10-30 form a helical membrane-spanning segment; the sequence is LAVGVLFHLFYLWSIFDIYFI. Residues 31–457 lie on the Lumenal side of the membrane; the sequence is SPLVHGMSPY…TTYNWRFIRT (427 aa). N-linked (GlcNAc...) asparagine glycans are attached at residues Asn90, Asn138, Asn198, Asn202, Asn286, and Asn312. A helical transmembrane segment spans residues 458-478; it reads IVTFGFVGWIFFSFIIFLKSF. Topologically, residues 479–488 are cytoplasmic; it reads ILENVIDDQK. A helical transmembrane segment spans residues 489-509; the sequence is ASPLSHAVFGSIGILLNWILF. Topologically, residues 510 to 512 are lumenal; that stretch reads YQH. A helical transmembrane segment spans residues 513–533; it reads SPFNFYMYLLFPLYFWSYIFT. Residues 534 to 553 are Cytoplasmic-facing; that stretch reads NRSVLRSGIKEFFKGTSPWK. A helical membrane pass occupies residues 554–574; the sequence is RVLITISIISVYEGIVYGFFH. Over 575–576 the chain is Lumenal; sequence RW. A helical transmembrane segment spans residues 577–597; sequence TFTLITNILAFYPFICGVREL. Residue Ser598 is a topological domain, cytoplasmic. Residues 599–619 form a helical membrane-spanning segment; that stretch reads VNILWIITSVLLSTFTLFDAV. The Lumenal portion of the chain corresponds to 620–626; it reads KIEDLNQ. Residues 627–647 traverse the membrane as a helical segment; the sequence is IHLAGLLIILSAFYALYKIHS. Topologically, residues 648–655 are cytoplasmic; it reads RINSYTRA. The chain crosses the membrane as a helical span at residues 656–676; that stretch reads IFAIQISLVAAMLAVTHRSVI. The Lumenal segment spans residues 677 to 687; that stretch reads SLQLRQGLPRE. A helical transmembrane segment spans residues 688–708; the sequence is SQVAGWIIFFVSLFVMPILHY. Over 709 to 720 the chain is Cytoplasmic; the sequence is RKPNNDYKVRLL. The helical transmembrane segment at 721 to 741 threads the bilayer; the sequence is IIYLTFAPSFIILTISFESLF. Residues 742-776 are Lumenal-facing; the sequence is YFLFTSYMVQWIEIENKIKEMKTQKDENWLQVLRV. The helical transmembrane segment at 777 to 797 threads the bilayer; that stretch reads SVIGFFLLQVAFFGTGNVASI. The Cytoplasmic segment spans residues 798–807; it reads SSFSLESVCR. The helical transmembrane segment at 808–828 threads the bilayer; the sequence is LLPIFDPFLMGALLMLKLIIP. Residues 829–848 are Lumenal-facing; sequence YGLLSTCLGILNLKLNFKDY. A helical transmembrane segment spans residues 849–869; it reads TISSLIISMSDILSLNFFYLL. Residues 870 to 885 are Cytoplasmic-facing; sequence RTEGSWLDIGITISNY. The chain crosses the membrane as a helical span at residues 886–906; sequence CLAILSSLFMLILEVLGHVLL. Residues 907-919 are Lumenal-facing; it reads KNVIIQDKTKKTQ.

Belongs to the PIGG/PIGN/PIGO family. PIGN subfamily. In terms of assembly, interacts with CSF1; CSF1 channels phosphatidylethanolamine to MCD4 in the endoplasmic reticulum at contact sites to support GPI anchor biosynthesis. Post-translationally, N-glycosylated.

Its subcellular location is the endoplasmic reticulum membrane. The protein resides in the golgi apparatus membrane. The protein localises to the vacuole membrane. The protein operates within glycolipid biosynthesis; glycosylphosphatidylinositol-anchor biosynthesis. Ethanolamine phosphate transferase involved in glycosylphosphatidylinositol-anchor biosynthesis. Transfers ethanolamine phosphate to the first alpha-1,4-linked mannose of the glycosylphosphatidylinositol precursor of GPI-anchor. Ethanolamine phosphate on the alpha-1,4-linked mannose is essential for further mannosylation by GPI10 and is necessary for an efficient recognition of GPI lipids and GPI proteins by the GPI transamidase, for the efficient transport of GPI anchored proteins from endoplasmic reticulum to Golgi and for the physiological incorporation of ceramides into GPI anchors by lipid remodeling. Also involved in non-mitochondrial ATP movements across membrane and participates in Golgi and endoplasmic reticulum function, Also required for the incorporation of BGL2 into the cell wall. The chain is GPI ethanolamine phosphate transferase 1 (MCD4) from Saccharomyces cerevisiae (strain ATCC 204508 / S288c) (Baker's yeast).